A 95-amino-acid chain; its full sequence is Large ribosomal subunit protein bL25 (95 aa).

Belongs to the bacterial ribosomal protein bL25 family. In terms of assembly, part of the 50S ribosomal subunit; part of the 5S rRNA/L5/L18/L25 subcomplex. Contacts the 5S rRNA. Binds to the 5S rRNA independently of L5 and L18.

Functionally, this is one of the proteins that binds to the 5S RNA in the ribosome where it forms part of the central protuberance. The sequence is that of Large ribosomal subunit protein bL25 from Actinobacillus pleuropneumoniae serotype 3 (strain JL03).